A 209-amino-acid chain; its full sequence is 3-hexulose-6-phosphate synthase (209 aa).

This sequence belongs to the HPS/KGPDC family. HPS subfamily. Homodimer.

It catalyses the reaction D-ribulose 5-phosphate + formaldehyde = D-arabino-hex-3-ulose 6-phosphate. It participates in one-carbon metabolism; formaldehyde assimilation via RuMP pathway; D-fructose 6-phosphate from D-ribulose 5-phosphate and formaldehyde: step 1/2. In terms of biological role, catalyzes the condensation of ribulose 5-phosphate with formaldehyde to form 3-hexulose 6-phosphate. The sequence is that of 3-hexulose-6-phosphate synthase (rmpA) from Methylomonas aminofaciens.